The sequence spans 418 residues: 3-deoxy-D-manno-octulosonic acid transferase (418 aa).

Residues 7-27 (FLSFLLLPIYFVIIFIRLLIG) form a helical; Signal-anchor membrane-spanning segment. Glutamate 60 acts as the Proton acceptor in catalysis. CMP is bound by residues 264 to 265 (PR), 305 to 307 (FGE), and 330 to 333 (NILE).

It belongs to the glycosyltransferase group 1 family. Glycosyltransferase 30 subfamily.

Its subcellular location is the cell inner membrane. It catalyses the reaction lipid IVA (E. coli) + CMP-3-deoxy-beta-D-manno-octulosonate = alpha-Kdo-(2-&gt;6)-lipid IVA (E. coli) + CMP + H(+). It participates in bacterial outer membrane biogenesis; LPS core biosynthesis. Involved in lipopolysaccharide (LPS) biosynthesis. Catalyzes the transfer of 3-deoxy-D-manno-octulosonate (Kdo) residue(s) from CMP-Kdo to lipid IV(A), the tetraacyldisaccharide-1,4'-bisphosphate precursor of lipid A. The chain is 3-deoxy-D-manno-octulosonic acid transferase (waaA) from Rickettsia bellii (strain RML369-C).